Reading from the N-terminus, the 337-residue chain is Glyceraldehyde-3-phosphate dehydrogenase 1 (337 aa).

NAD(+)-binding positions include Arg-12–Ile-13, Asp-34, and Arg-79. D-glyceraldehyde 3-phosphate is bound by residues Ser-150 to Thr-152, Thr-181, Thr-210 to Gly-211, and Arg-233. Cys-151 acts as the Nucleophile in catalysis. Asn-315 serves as a coordination point for NAD(+).

It belongs to the glyceraldehyde-3-phosphate dehydrogenase family. Homotetramer.

The protein localises to the cytoplasm. It catalyses the reaction D-glyceraldehyde 3-phosphate + phosphate + NAD(+) = (2R)-3-phospho-glyceroyl phosphate + NADH + H(+). It participates in carbohydrate degradation; glycolysis; pyruvate from D-glyceraldehyde 3-phosphate: step 1/5. The protein is Glyceraldehyde-3-phosphate dehydrogenase 1 (GPD1) of Mucor circinelloides f. lusitanicus (Mucor racemosus var. lusitanicus).